The following is a 484-amino-acid chain: UDP-N-acetylmuramate--L-alanine ligase (484 aa).

ATP is bound at residue 125 to 131 (GTHGKTT).

Belongs to the MurCDEF family.

The protein localises to the cytoplasm. It catalyses the reaction UDP-N-acetyl-alpha-D-muramate + L-alanine + ATP = UDP-N-acetyl-alpha-D-muramoyl-L-alanine + ADP + phosphate + H(+). Its pathway is cell wall biogenesis; peptidoglycan biosynthesis. Cell wall formation. This is UDP-N-acetylmuramate--L-alanine ligase from Buchnera aphidicola subsp. Acyrthosiphon pisum (strain 5A).